Consider the following 571-residue polypeptide: Dual specificity testis-specific protein kinase 2 (571 aa).

The Protein kinase domain maps to 58–313; that stretch reads DFTCEKIGSG…EIGKTLEEIL (256 aa). ATP is bound by residues 64–72 and Lys87; that span reads IGSGFFSEV. Catalysis depends on Asp176, which acts as the Proton acceptor. Ser219 is modified (phosphoserine; by autocatalysis). Residues Ser369, Ser456, and Ser460 each carry the phosphoserine modification. Positions 521 to 571 are disordered; it reads ENGFGSRPQGTSPCPAGASEEMEVEERPAGSTPATFSTSGIGLQTQGKQDG. Polar residues predominate over residues 552–571; that stretch reads TPATFSTSGIGLQTQGKQDG.

It belongs to the protein kinase superfamily. TKL Ser/Thr protein kinase family. The cofactor is Mg(2+). Mn(2+) is required as a cofactor. As to expression, predominantly expressed in testis and prostate. Found predominantly in non-germinal Sertoli cells.

The protein localises to the nucleus. It carries out the reaction L-seryl-[protein] + ATP = O-phospho-L-seryl-[protein] + ADP + H(+). The catalysed reaction is L-threonyl-[protein] + ATP = O-phospho-L-threonyl-[protein] + ADP + H(+). The enzyme catalyses L-tyrosyl-[protein] + ATP = O-phospho-L-tyrosyl-[protein] + ADP + H(+). With respect to regulation, activated by autophosphorylation on Ser-219. Dual specificity protein kinase activity catalyzing autophosphorylation and phosphorylation of exogenous substrates on both serine/threonine and tyrosine residues. Phosphorylates cofilin at 'Ser-3'. May play an important role in spermatogenesis. In Homo sapiens (Human), this protein is Dual specificity testis-specific protein kinase 2 (TESK2).